A 159-amino-acid chain; its full sequence is UPF0178 protein AZC_4000 (159 aa).

It belongs to the UPF0178 family.

The chain is UPF0178 protein AZC_4000 from Azorhizobium caulinodans (strain ATCC 43989 / DSM 5975 / JCM 20966 / LMG 6465 / NBRC 14845 / NCIMB 13405 / ORS 571).